The following is a 178-amino-acid chain: Transcription factor E (178 aa).

Residues 5–89 (AEELILSLAK…YWKVNIDQIN (85 aa)) form the HTH TFE/IIEalpha-type domain.

The protein belongs to the TFE family. As to quaternary structure, monomer. Interaction with RNA polymerase subunits RpoF and RpoE is necessary for Tfe stimulatory transcription activity. Able to interact with Tbp and RNA polymerase in the absence of DNA promoter. Interacts both with the preinitiation and elongation complexes.

Transcription factor that plays a role in the activation of archaeal genes transcribed by RNA polymerase. Facilitates transcription initiation by enhancing TATA-box recognition by TATA-box-binding protein (Tbp), and transcription factor B (Tfb) and RNA polymerase recruitment. Not absolutely required for transcription in vitro, but particularly important in cases where Tbp or Tfb function is not optimal. It dynamically alters the nucleic acid-binding properties of RNA polymerases by stabilizing the initiation complex and destabilizing elongation complexes. Seems to translocate with the RNA polymerase following initiation and acts by binding to the non template strand of the transcription bubble in elongation complexes. In Sulfurisphaera tokodaii (strain DSM 16993 / JCM 10545 / NBRC 100140 / 7) (Sulfolobus tokodaii), this protein is Transcription factor E.